A 209-amino-acid chain; its full sequence is Ribosomal RNA large subunit methyltransferase E (209 aa).

5 residues coordinate S-adenosyl-L-methionine: Gly-63, Trp-65, Asp-83, Asp-99, and Asp-124. Residue Lys-164 is the Proton acceptor of the active site.

This sequence belongs to the class I-like SAM-binding methyltransferase superfamily. RNA methyltransferase RlmE family.

It localises to the cytoplasm. It catalyses the reaction uridine(2552) in 23S rRNA + S-adenosyl-L-methionine = 2'-O-methyluridine(2552) in 23S rRNA + S-adenosyl-L-homocysteine + H(+). Functionally, specifically methylates the uridine in position 2552 of 23S rRNA at the 2'-O position of the ribose in the fully assembled 50S ribosomal subunit. The polypeptide is Ribosomal RNA large subunit methyltransferase E (Klebsiella pneumoniae (strain 342)).